We begin with the raw amino-acid sequence, 132 residues long: Actin-related protein 2/3 complex subunit 5A (132 aa).

At A2 the chain carries N-acetylalanine.

This sequence belongs to the ARPC5 family. In terms of assembly, component of the Arp2/3 complex composed of ARP2, ARP3, ARPC1/p41-ARC, ARPC2/p34-ARC, ARPC3/p21-ARC, ARPC4/p20-ARC and ARPC5/p16-ARC. Expressed at low levels in all tissues with a relatively highest expression in inflorescences.

The protein resides in the cytoplasm. It localises to the cytoskeleton. It is found in the cell projection. In terms of biological role, functions as a component of the Arp2/3 complex which is involved in regulation of actin polymerization and together with an activating nucleation-promoting factor (NPF) mediates the formation of branched actin networks. Arp2/3 complex plays a critical role in the control of cell morphogenesis via the modulation of cell polarity development. In Arabidopsis thaliana (Mouse-ear cress), this protein is Actin-related protein 2/3 complex subunit 5A (ARPC5A).